The sequence spans 335 residues: Partner of xrn-2 protein 1 (335 aa).

An XRN2-binding (XTBD) domain is found at Val7–Lys91. The tract at residues Val95–Val119 is disordered. The span at Asp105–Lys114 shows a compositional bias: basic and acidic residues.

As to quaternary structure, interacts (via N-terminus) with xrn-2; the interaction is direct.

The protein localises to the nucleus. The protein resides in the nucleolus. It localises to the nucleoplasm. Its function is as follows. Plays a role in maintenance of steady-state concentration and turnover of microRNAs (miRNA) by degradation of mature miRNA in complex with the exoribonuclease xrn-2. Stabilizes and enhances the accumulation and activity of the exoribonuclease xrn-2, and thus contributes to miRNA turnover. The sequence is that of Partner of xrn-2 protein 1 from Caenorhabditis elegans.